Consider the following 128-residue polypeptide: 3-aminoacrylate deaminase RutC (128 aa).

The protein belongs to the RutC family. Homotrimer.

It carries out the reaction (Z)-3-aminoacrylate + H2O + H(+) = 3-oxopropanoate + NH4(+). In terms of biological role, involved in pyrimidine catabolism. Catalyzes the deamination of 3-aminoacrylate to malonic semialdehyde, a reaction that can also occur spontaneously. RutC may facilitate the reaction and modulate the metabolic fitness, rather than catalyzing essential functions. The chain is 3-aminoacrylate deaminase RutC from Escherichia coli O103:H2 (strain 12009 / EHEC).